The following is a 377-amino-acid chain: Unsaturated 3S-rhamnoglycuronyl hydrolase (377 aa).

Positions Met1–Ala25 are cleaved as a signal peptide. Catalysis depends on Asp161, which acts as the Proton donor.

Belongs to the glycosyl hydrolase 105 family.

Its subcellular location is the periplasm. Its function is as follows. Unsaturated beta-glucuronyl hydrolase involved in ulvan degradation. Ulvan is the main polysaccharide component of the Ulvales (green seaweed) cell wall. It is composed of disaccharide building blocks comprising 3-sulfated rhamnose (Rha3S) linked to D-glucuronic acid (GlcA), L-iduronic acid (IduA), or D-xylose (Xyl). Unsaturated 3S-rhamnoglycuronyl hydrolase works together with ulvan lyases to fully degrade the ulvan polymer, catalyzing specifically the cleavage of the unsaturated 4-deoxy-L-threo-hex-4-enopyranosiduronic acid (deltaUA) of deltaUA-Rha3S disaccharides and deltaUA-Rha3S-Xyl-Rha3S tetrasaccharides, the end products of the ulvan lyase reaction. Also hydrolases deltaUA-Rha3S-IduA-Rha3S and deltaUA-Rha3S-GlcA-Rha3S tetrasaccharidestetrasaccharides. Prefers tetrasaccharides over disaccharides and prefers an uronic residue at subsite +2. The polypeptide is Unsaturated 3S-rhamnoglycuronyl hydrolase (Formosa agariphila (strain DSM 15362 / KCTC 12365 / LMG 23005 / KMM 3901 / M-2Alg 35-1)).